Here is a 163-residue protein sequence, read N- to C-terminus: Regulator of chromosome segregation (163 aa).

Interacts with CpsD and ParB.

The protein resides in the cytoplasm. The protein localises to the nucleoid. It is found in the cell membrane. In terms of biological role, required for cell division and chromosome segregation. Binds to DNA and is involved in segregating the origin of replication (oriC) region to new daughter cells. When the nucleoid is not properly segregated, involved in blocking the cell division to protect the nucleoid against premature truncation by the newly forming septum, a function which is dependent on CpsD and its autophosphorylation level. This chain is Regulator of chromosome segregation, found in Streptococcus pneumoniae serotype 2 (strain D39 / NCTC 7466).